A 278-amino-acid chain; its full sequence is ATP synthase subunit delta (278 aa).

Belongs to the ATPase delta chain family. F-type ATPases have 2 components, F(1) - the catalytic core - and F(0) - the membrane proton channel. F(1) has five subunits: alpha(3), beta(3), gamma(1), delta(1), epsilon(1). F(0) has three main subunits: a(1), b(2) and c(10-14). The alpha and beta chains form an alternating ring which encloses part of the gamma chain. F(1) is attached to F(0) by a central stalk formed by the gamma and epsilon chains, while a peripheral stalk is formed by the delta and b chains.

The protein resides in the cell membrane. F(1)F(0) ATP synthase produces ATP from ADP in the presence of a proton or sodium gradient. F-type ATPases consist of two structural domains, F(1) containing the extramembraneous catalytic core and F(0) containing the membrane proton channel, linked together by a central stalk and a peripheral stalk. During catalysis, ATP synthesis in the catalytic domain of F(1) is coupled via a rotary mechanism of the central stalk subunits to proton translocation. Functionally, this protein is part of the stalk that links CF(0) to CF(1). It either transmits conformational changes from CF(0) to CF(1) or is implicated in proton conduction. In Bifidobacterium longum subsp. infantis (strain ATCC 15697 / DSM 20088 / JCM 1222 / NCTC 11817 / S12), this protein is ATP synthase subunit delta.